Here is a 424-residue protein sequence, read N- to C-terminus: Tol-Pal system protein TolB (424 aa).

An N-terminal signal peptide occupies residues 1–16 (MKQLLVLILSLYTTLA).

The protein belongs to the TolB family. The Tol-Pal system is composed of five core proteins: the inner membrane proteins TolA, TolQ and TolR, the periplasmic protein TolB and the outer membrane protein Pal. They form a network linking the inner and outer membranes and the peptidoglycan layer.

It localises to the periplasm. Functionally, part of the Tol-Pal system, which plays a role in outer membrane invagination during cell division and is important for maintaining outer membrane integrity. The protein is Tol-Pal system protein TolB of Ruthia magnifica subsp. Calyptogena magnifica.